The sequence spans 173 residues: Protein tyrosine phosphatase type IVA 1 (173 aa).

The Tyrosine-protein phosphatase domain maps to 8 to 161; it reads APVEVTYKNM…YRPKMRLRFK (154 aa). Cys49 and Cys104 are oxidised to a cystine. Asp72 functions as the Proton donor in the catalytic mechanism. An interaction with ATF5 region spans residues 97-132; sequence GCCIAVHCVAGLGRAPVLVALALIEGGMKYEDAVQF. Cys104 functions as the Phosphocysteine intermediate in the catalytic mechanism. 105-110 provides a ligand contact to phosphate; the sequence is VAGLGR. A substrate-binding site is contributed by Arg110. Cys170 carries the post-translational modification Cysteine methyl ester. Residue Cys170 is the site of S-farnesyl cysteine attachment. The propeptide at 171–173 is removed in mature form; it reads CIQ.

The protein belongs to the protein-tyrosine phosphatase family. As to quaternary structure, homotrimer. Interacts with ATF5. Interacts with tubulin. In terms of processing, farnesylated. Farnesylation is required for membrane targeting. Unfarnesylated forms are shifted into the nucleus. In terms of tissue distribution, expressed in bone marrow, lymph nodes, T lymphocytes, spleen, thymus and tonsil. Overexpressed in tumor cell lines.

It localises to the cell membrane. The protein resides in the early endosome. It is found in the endoplasmic reticulum. The protein localises to the cytoplasm. Its subcellular location is the cytoskeleton. It localises to the spindle. The protein resides in the nucleus. It carries out the reaction O-phospho-L-tyrosyl-[protein] + H2O = L-tyrosyl-[protein] + phosphate. Its activity is regulated as follows. Inhibited by sodium orthovanadate and pentamidine. Protein tyrosine phosphatase which stimulates progression from G1 into S phase during mitosis. May play a role in the development and maintenance of differentiating epithelial tissues. Enhances cell proliferation, cell motility and invasive activity, and promotes cancer metastasis. The chain is Protein tyrosine phosphatase type IVA 1 (PTP4A1) from Homo sapiens (Human).